The following is a 139-amino-acid chain: uncharacterized protein (139 aa).

This is an uncharacterized protein from Aquifex aeolicus (strain VF5).